The primary structure comprises 282 residues: Putative hydrolase Bcep18194_B0137 (282 aa).

3 residues coordinate Mg(2+): glutamate 124, glutamate 126, and aspartate 155.

It belongs to the FAH family. The cofactor is Mg(2+).

The chain is Putative hydrolase Bcep18194_B0137 from Burkholderia lata (strain ATCC 17760 / DSM 23089 / LMG 22485 / NCIMB 9086 / R18194 / 383).